Reading from the N-terminus, the 70-residue chain is MGMRMMFTMILLVVLVTTVVSFTLDRVLGPVSDGRNAAPDDEKFDRMEYFLSKCCANPSTCDLSLLCIFG.

An N-terminal signal peptide occupies residues 1–21 (MGMRMMFTMILLVVLVTTVVS). 2 disulfide bridges follow: Cys54-Cys61 and Cys55-Cys67. Phe69 is modified (phenylalanine amide).

Belongs to the conotoxin A superfamily. As to expression, expressed by the venom duct.

The protein localises to the secreted. In terms of biological role, probable neurotoxin with unknown target. Possibly targets ion channels. This is Conotoxin Pl171 from Conus planorbis (Planorbis cone).